A 317-amino-acid chain; its full sequence is Aspartate carbamoyltransferase catalytic subunit (317 aa).

Carbamoyl phosphate is bound by residues Arg-66 and Thr-67. Lys-94 contacts L-aspartate. 3 residues coordinate carbamoyl phosphate: Arg-116, His-144, and Gln-147. Residues Arg-177 and Arg-231 each coordinate L-aspartate. Carbamoyl phosphate is bound by residues Gly-272 and Pro-273.

This sequence belongs to the aspartate/ornithine carbamoyltransferase superfamily. ATCase family. As to quaternary structure, heterododecamer (2C3:3R2) of six catalytic PyrB chains organized as two trimers (C3), and six regulatory PyrI chains organized as three dimers (R2).

It carries out the reaction carbamoyl phosphate + L-aspartate = N-carbamoyl-L-aspartate + phosphate + H(+). It functions in the pathway pyrimidine metabolism; UMP biosynthesis via de novo pathway; (S)-dihydroorotate from bicarbonate: step 2/3. In terms of biological role, catalyzes the condensation of carbamoyl phosphate and aspartate to form carbamoyl aspartate and inorganic phosphate, the committed step in the de novo pyrimidine nucleotide biosynthesis pathway. In Nitrobacter winogradskyi (strain ATCC 25391 / DSM 10237 / CIP 104748 / NCIMB 11846 / Nb-255), this protein is Aspartate carbamoyltransferase catalytic subunit.